A 20-amino-acid polypeptide reads, in one-letter code: Small ribosomal subunit protein bS20 (20 aa).

The protein belongs to the bacterial ribosomal protein bS20 family.

In terms of biological role, binds directly to 16S ribosomal RNA. The sequence is that of Small ribosomal subunit protein bS20 (rpsT) from Brevundimonas diminuta (Pseudomonas diminuta).